Reading from the N-terminus, the 457-residue chain is UDP-N-acetylmuramoylalanine--D-glutamate ligase (457 aa).

G116–T122 is an ATP binding site.

Belongs to the MurCDEF family.

The protein localises to the cytoplasm. It carries out the reaction UDP-N-acetyl-alpha-D-muramoyl-L-alanine + D-glutamate + ATP = UDP-N-acetyl-alpha-D-muramoyl-L-alanyl-D-glutamate + ADP + phosphate + H(+). It participates in cell wall biogenesis; peptidoglycan biosynthesis. In terms of biological role, cell wall formation. Catalyzes the addition of glutamate to the nucleotide precursor UDP-N-acetylmuramoyl-L-alanine (UMA). The polypeptide is UDP-N-acetylmuramoylalanine--D-glutamate ligase (Caldicellulosiruptor bescii (strain ATCC BAA-1888 / DSM 6725 / KCTC 15123 / Z-1320) (Anaerocellum thermophilum)).